The following is a 499-amino-acid chain: Probable malate:quinone oxidoreductase 4 (499 aa).

This sequence belongs to the MQO family. Requires FAD as cofactor.

It catalyses the reaction (S)-malate + a quinone = a quinol + oxaloacetate. Its pathway is carbohydrate metabolism; tricarboxylic acid cycle; oxaloacetate from (S)-malate (quinone route): step 1/1. This is Probable malate:quinone oxidoreductase 4 from Staphylococcus epidermidis (strain ATCC 12228 / FDA PCI 1200).